A 534-amino-acid chain; its full sequence is 26S proteasome non-ATPase regulatory subunit 3 (534 aa).

Basic and acidic residues predominate over residues 1–16 (MKQEGSARRRGADKAK). Positions 1–69 (MKQEGSARRR…AEHSQRELDT (69 aa)) are disordered. Over residues 17 to 32 (PPPGGGEQEPPPPPAP) the composition is skewed to pro residues. Residue Lys38 forms a Glycyl lysine isopeptide (Lys-Gly) (interchain with G-Cter in SUMO1); alternate linkage. Residue Lys38 forms a Glycyl lysine isopeptide (Lys-Gly) (interchain with G-Cter in SUMO2); alternate linkage. Residues 286-465 (ARYLYYTGRI…GYVQSKEMID (180 aa)) enclose the PCI domain. Phosphoserine is present on residues Ser418 and Ser430. The tract at residues 500–534 (SYNKDLESAEERREREQQDLEFAKEMAEDDDDSFP) is disordered. Residues 501–525 (YNKDLESAEERREREQQDLEFAKEM) show a composition bias toward basic and acidic residues.

It belongs to the proteasome subunit S3 family. Component of the 19S proteasome regulatory particle complex. The 26S proteasome consists of a 20S core particle (CP) and two 19S regulatory subunits (RP). The regulatory particle is made of a lid composed of 9 subunits including PSMD3, a base containing 6 ATPases and few additional components. Interacts with UBQLN1 (via ubiquitin-like domain). Interacts with ERCC6.

Functionally, component of the 26S proteasome, a multiprotein complex involved in the ATP-dependent degradation of ubiquitinated proteins. This complex plays a key role in the maintenance of protein homeostasis by removing misfolded or damaged proteins, which could impair cellular functions, and by removing proteins whose functions are no longer required. Therefore, the proteasome participates in numerous cellular processes, including cell cycle progression, apoptosis, or DNA damage repair. The sequence is that of 26S proteasome non-ATPase regulatory subunit 3 (PSMD3) from Homo sapiens (Human).